A 99-amino-acid polypeptide reads, in one-letter code: Ubiquitin-related modifier 1 homolog (99 aa).

1-thioglycine is present on Gly99. Gly99 is covalently cross-linked (Glycyl lysine isopeptide (Gly-Lys) (interchain with K-? in acceptor proteins)).

This sequence belongs to the URM1 family. Interacts with cer. C-terminal thiocarboxylation occurs in 2 steps, it is first acyl-adenylated (-COAMP) via the hesA/moeB/thiF part of the MOCS3 homolog, then thiocarboxylated (-COSH) via the rhodanese domain of the MOCS3 homolog.

Its subcellular location is the cytoplasm. Its pathway is tRNA modification; 5-methoxycarbonylmethyl-2-thiouridine-tRNA biosynthesis. Acts as a sulfur carrier required for 2-thiolation of mcm(5)S(2)U at tRNA wobble positions of cytosolic tRNA(Lys), tRNA(Glu) and tRNA(Gln). Serves as sulfur donor in tRNA 2-thiolation reaction by being thiocarboxylated (-COSH) at its C-terminus by MOCS3. The sulfur is then transferred to tRNA to form 2-thiolation of mcm(5)S(2)U. Also acts as a ubiquitin-like protein (UBL) that is covalently conjugated via an isopeptide bond to lysine residues of target proteins such as Prx2/Jafrac1, Ciao1, Eip71CD and GILT1. The thiocarboxylated form serves as substrate for conjugation and oxidative stress specifically induces the formation of UBL-protein conjugates. The sequence is that of Ubiquitin-related modifier 1 homolog from Drosophila persimilis (Fruit fly).